The chain runs to 156 residues: Transcriptional repressor NrdR (156 aa).

A zinc finger spans residues 3 to 34 (CPKCNSTHSRVVDSRHADEVNAIRRRRECEEC). An ATP-cone domain is found at 49–139 (LIVVKKDGTR…VYKEFKDVDQ (91 aa)).

This sequence belongs to the NrdR family. Zn(2+) is required as a cofactor.

In terms of biological role, negatively regulates transcription of bacterial ribonucleotide reductase nrd genes and operons by binding to NrdR-boxes. The polypeptide is Transcriptional repressor NrdR (Staphylococcus saprophyticus subsp. saprophyticus (strain ATCC 15305 / DSM 20229 / NCIMB 8711 / NCTC 7292 / S-41)).